Consider the following 101-residue polypeptide: NAD(P)H-quinone oxidoreductase subunit 4L, chloroplastic (101 aa).

3 helical membrane passes run 2–22, 32–52, and 61–81; these read ILEH…YGLI, MCLE…SDFF, and IFCI…LAIV.

It belongs to the complex I subunit 4L family. As to quaternary structure, NDH is composed of at least 16 different subunits, 5 of which are encoded in the nucleus.

It is found in the plastid. Its subcellular location is the chloroplast thylakoid membrane. The enzyme catalyses a plastoquinone + NADH + (n+1) H(+)(in) = a plastoquinol + NAD(+) + n H(+)(out). It carries out the reaction a plastoquinone + NADPH + (n+1) H(+)(in) = a plastoquinol + NADP(+) + n H(+)(out). Its function is as follows. NDH shuttles electrons from NAD(P)H:plastoquinone, via FMN and iron-sulfur (Fe-S) centers, to quinones in the photosynthetic chain and possibly in a chloroplast respiratory chain. The immediate electron acceptor for the enzyme in this species is believed to be plastoquinone. Couples the redox reaction to proton translocation, and thus conserves the redox energy in a proton gradient. In Arabis hirsuta (Hairy rock-cress), this protein is NAD(P)H-quinone oxidoreductase subunit 4L, chloroplastic.